A 1475-amino-acid polypeptide reads, in one-letter code: Mediator of RNA polymerase II transcription subunit 1.1 (1475 aa).

Disordered stretches follow at residues 579 to 600, 645 to 894, and 908 to 1475; these read STIG…LTSM, GLAS…KMRE, and PDVE…IDDE. Residues 655 to 666 show a composition bias toward low complexity; it reads PVAAAAAAPGGP. The span at 755-766 shows a compositional bias: polar residues; that stretch reads QRSSSEQHNPNP. Low complexity predominate over residues 767 to 800; sequence HQMSQYQMQQYQQNQQFRMHQMQQQQQQQFQMQS. Positions 810–819 are enriched in acidic residues; the sequence is TDEDSDEECD. The segment covering 829–838 has biased composition (low complexity); it reads STSSRMSSVP. Pro residues predominate over residues 869-880; the sequence is TPSPLSAPPKPF. A compositionally biased stretch (low complexity) spans 915 to 929; the sequence is QQLSSSSSSSQAEAS. Positions 941–952 are enriched in pro residues; it reads PPKPSSSSAPPP. Low complexity-rich tracts occupy residues 969-989 and 1037-1049; these read QQEQ…SELA and QKPT…STSS. Basic and acidic residues-rich tracts occupy residues 1052–1070, 1080–1148, and 1155–1180; these read PPKK…EKLI, VVDD…EKEP, and EKKD…KEYS. Positions 1098 to 1135 form a coiled coil; it reads DRDRDEDREKVRDKEDKAQREKDKKEKERERRRQRDRD. Over residues 1181-1193 the composition is skewed to polar residues; sequence KASTTSLIPTLSL. A compositionally biased stretch (basic and acidic residues) spans 1199-1215; the sequence is PKKDTVEEEKKDVKEEA. A compositionally biased stretch (low complexity) spans 1242 to 1252; that stretch reads APVAPAVQQQQ. Positions 1281–1291 are enriched in pro residues; it reads PLQPPPPPQMT. Positions 1308-1317 are enriched in polar residues; that stretch reads PGSSRPSGNR. Pro residues-rich tracts occupy residues 1320–1334 and 1425–1440; these read PLPP…PPPD and PPAP…PKDP.

This sequence belongs to the Mediator complex subunit 1 family. Component of the Mediator complex.

The protein resides in the nucleus. Its function is as follows. Component of the Mediator complex, a coactivator involved in the regulated transcription of nearly all RNA polymerase II-dependent genes. Mediator functions as a bridge to convey information from gene-specific regulatory proteins to the basal RNA polymerase II transcription machinery. Mediator is recruited to promoters by direct interactions with regulatory proteins and serves as a scaffold for the assembly of a functional preinitiation complex with RNA polymerase II and the general transcription factors. This Caenorhabditis elegans protein is Mediator of RNA polymerase II transcription subunit 1.1 (sop-3).